The chain runs to 476 residues: Splicing factor ESS-2 homolog (476 aa).

Methionine 1 is modified (N-acetylmethionine). Residues 1–18 (METPGASASSLLLPAASR) are compositionally biased toward low complexity. 2 disordered regions span residues 1–36 (METP…SKQR) and 91–148 (LGKM…LPSL). At threonine 3 the chain carries Phosphothreonine. Residues 133-142 (DGEAGEEEEK) are compositionally biased toward acidic residues. Residue lysine 142 forms a Glycyl lysine isopeptide (Lys-Gly) (interchain with G-Cter in SUMO2) linkage. Serine 292 carries the phosphoserine modification. Residue threonine 386 is modified to Phosphothreonine. 2 positions are modified to phosphoserine: serine 391 and serine 395. Residues 413–465 (ALRASYTPSPARSTHLKTPASGLQTPTSTPAPGSATRTPLTQDPASITDNLLQ) are disordered. Over residues 437–451 (TPTSTPAPGSATRTP) the composition is skewed to low complexity. Positions 452–463 (LTQDPASITDNL) are enriched in polar residues.

It belongs to the ESS2 family. Identified in the spliceosome C complex. Interacts with FRA10AC1. In terms of tissue distribution, highly expressed in heart, brain and skeletal muscle. Detected at low levels in placenta.

It is found in the nucleus. Its function is as follows. May be involved in pre-mRNA splicing. In Homo sapiens (Human), this protein is Splicing factor ESS-2 homolog.